The primary structure comprises 360 residues: Putative FBD-associated F-box protein At5g56430 (360 aa).

An F-box domain is found at methionine 1 to alanine 53. Kelch repeat units lie at residues isoleucine 140 to aspartate 186 and valine 235 to glutamate 285. The 51-residue stretch at lysine 276 to phenylalanine 326 folds into the FBD domain.

In Arabidopsis thaliana (Mouse-ear cress), this protein is Putative FBD-associated F-box protein At5g56430.